The sequence spans 128 residues: Large ribosomal subunit protein bL21 (128 aa).

Positions 104 to 128 (GKKPSVGPRPKRVKAEPAPAADAAE) are disordered. The segment covering 119 to 128 (EPAPAADAAE) has biased composition (low complexity).

This sequence belongs to the bacterial ribosomal protein bL21 family. In terms of assembly, part of the 50S ribosomal subunit. Contacts protein L20.

In terms of biological role, this protein binds to 23S rRNA in the presence of protein L20. This is Large ribosomal subunit protein bL21 from Rhodopseudomonas palustris (strain BisB5).